A 457-amino-acid chain; its full sequence is Chromosomal replication initiator protein DnaA (457 aa).

The interval Met1–Thr71 is domain I, interacts with DnaA modulators. Residues Thr71 to Ser119 form a domain II region. Positions Glu120–Ser337 are domain III, AAA+ region. ATP-binding residues include Gly165, Gly167, Lys168, and Thr169. The tract at residues Asp338–Ser457 is domain IV, binds dsDNA.

It belongs to the DnaA family. Oligomerizes as a right-handed, spiral filament on DNA at oriC.

The protein localises to the cytoplasm. Functionally, plays an essential role in the initiation and regulation of chromosomal replication. ATP-DnaA binds to the origin of replication (oriC) to initiate formation of the DNA replication initiation complex once per cell cycle. Binds the DnaA box (a 9 base pair repeat at the origin) and separates the double-stranded (ds)DNA. Forms a right-handed helical filament on oriC DNA; dsDNA binds to the exterior of the filament while single-stranded (ss)DNA is stabiized in the filament's interior. The ATP-DnaA-oriC complex binds and stabilizes one strand of the AT-rich DNA unwinding element (DUE), permitting loading of DNA polymerase. After initiation quickly degrades to an ADP-DnaA complex that is not apt for DNA replication. Binds acidic phospholipids. The chain is Chromosomal replication initiator protein DnaA from Buchnera aphidicola subsp. Baizongia pistaciae (strain Bp).